A 268-amino-acid chain; its full sequence is Hydroxyethylthiazole kinase 2 (268 aa).

M42 contacts substrate. K117 and T167 together coordinate ATP. G194 contributes to the substrate binding site.

This sequence belongs to the Thz kinase family. Mg(2+) is required as a cofactor.

The catalysed reaction is 5-(2-hydroxyethyl)-4-methylthiazole + ATP = 4-methyl-5-(2-phosphooxyethyl)-thiazole + ADP + H(+). It participates in cofactor biosynthesis; thiamine diphosphate biosynthesis; 4-methyl-5-(2-phosphoethyl)-thiazole from 5-(2-hydroxyethyl)-4-methylthiazole: step 1/1. Catalyzes the phosphorylation of the hydroxyl group of 4-methyl-5-beta-hydroxyethylthiazole (THZ). This chain is Hydroxyethylthiazole kinase 2, found in Streptococcus pneumoniae (strain CGSP14).